We begin with the raw amino-acid sequence, 55 residues long: UPF0391 membrane protein Sfum_0248 (55 aa).

Helical transmembrane passes span 4–24 (WALI…GGII) and 28–48 (AWIA…SLLS).

It belongs to the UPF0391 family.

It is found in the cell membrane. The protein is UPF0391 membrane protein Sfum_0248 of Syntrophobacter fumaroxidans (strain DSM 10017 / MPOB).